A 232-amino-acid chain; its full sequence is Large ribosomal subunit protein uL1 (232 aa).

The protein belongs to the universal ribosomal protein uL1 family. Part of the 50S ribosomal subunit.

Binds directly to 23S rRNA. The L1 stalk is quite mobile in the ribosome, and is involved in E site tRNA release. In terms of biological role, protein L1 is also a translational repressor protein, it controls the translation of the L11 operon by binding to its mRNA. In Ruegeria pomeroyi (strain ATCC 700808 / DSM 15171 / DSS-3) (Silicibacter pomeroyi), this protein is Large ribosomal subunit protein uL1.